The primary structure comprises 1171 residues: DNA-directed RNA polymerase subunit beta' (1171 aa).

The Zn(2+) site is built by cysteine 60, cysteine 62, cysteine 75, and cysteine 78. Positions 299–319 (GRRGKPVTGPGNRPLKSLSDM) are disordered. Mg(2+) contacts are provided by aspartate 449, aspartate 451, and aspartate 453. 4 residues coordinate Zn(2+): cysteine 790, cysteine 864, cysteine 871, and cysteine 874.

The protein belongs to the RNA polymerase beta' chain family. As to quaternary structure, the RNAP catalytic core consists of 2 alpha, 1 beta, 1 beta' and 1 omega subunit. When a sigma factor is associated with the core the holoenzyme is formed, which can initiate transcription. Requires Mg(2+) as cofactor. Zn(2+) is required as a cofactor.

It catalyses the reaction RNA(n) + a ribonucleoside 5'-triphosphate = RNA(n+1) + diphosphate. In terms of biological role, DNA-dependent RNA polymerase catalyzes the transcription of DNA into RNA using the four ribonucleoside triphosphates as substrates. The sequence is that of DNA-directed RNA polymerase subunit beta' from Alkaliphilus metalliredigens (strain QYMF).